The following is a 156-amino-acid chain: uncharacterized protein (156 aa).

This is an uncharacterized protein from Saccharolobus islandicus (Sulfolobus islandicus).